The chain runs to 443 residues: D-serine dehydratase (443 aa).

The residue at position 118 (Lys118) is an N6-(pyridoxal phosphate)lysine.

This sequence belongs to the serine/threonine dehydratase family. DsdA subfamily. In terms of assembly, monomer. Pyridoxal 5'-phosphate serves as cofactor.

The catalysed reaction is D-serine = pyruvate + NH4(+). The chain is D-serine dehydratase from Escherichia coli O17:K52:H18 (strain UMN026 / ExPEC).